Reading from the N-terminus, the 318-residue chain is Pyrimidine-specific ribonucleoside hydrolase RihA (318 aa).

His240 is an active-site residue.

It belongs to the IUNH family. RihA subfamily.

In terms of biological role, hydrolyzes cytidine or uridine to ribose and cytosine or uracil, respectively. The polypeptide is Pyrimidine-specific ribonucleoside hydrolase RihA (Shewanella baltica (strain OS185)).